Reading from the N-terminus, the 276-residue chain is Large ribosomal subunit protein uL2 (276 aa).

Residues 223–276 are disordered; it reads GAAMNPVDHPHGGGEGRAPRGRPPASPWGWQTKGLKTRKRRKPSSRFIIARRKK. Over residues 230–240 the composition is skewed to basic and acidic residues; sequence DHPHGGGEGRA. Over residues 257–276 the composition is skewed to basic residues; it reads LKTRKRRKPSSRFIIARRKK.

This sequence belongs to the universal ribosomal protein uL2 family. As to quaternary structure, part of the 50S ribosomal subunit. Forms a bridge to the 30S subunit in the 70S ribosome.

Its function is as follows. One of the primary rRNA binding proteins. Required for association of the 30S and 50S subunits to form the 70S ribosome, for tRNA binding and peptide bond formation. It has been suggested to have peptidyltransferase activity; this is somewhat controversial. Makes several contacts with the 16S rRNA in the 70S ribosome. The protein is Large ribosomal subunit protein uL2 of Thermus thermophilus (strain ATCC BAA-163 / DSM 7039 / HB27).